Here is a 245-residue protein sequence, read N- to C-terminus: Thiopurine S-methyltransferase (245 aa).

29–40 (WREKWVDGKIGF) is an S-adenosyl-L-methionine binding site. Phe-40 lines the substrate pocket. Lys-58 is modified (N6-acetyllysine). 3 residues coordinate S-adenosyl-L-methionine: Leu-69, Glu-90, and Arg-152.

This sequence belongs to the class I-like SAM-binding methyltransferase superfamily. TPMT family. Monomer.

The protein resides in the cytoplasm. The catalysed reaction is S-adenosyl-L-methionine + a thiopurine = S-adenosyl-L-homocysteine + a thiopurine S-methylether.. The sequence is that of Thiopurine S-methyltransferase (TPMT) from Panthera pardus (Leopard).